The chain runs to 235 residues: Small ribosomal subunit protein uS10m (235 aa).

The transit peptide at 1–19 (MLRTSVRSPLLYRCLSKRF) directs the protein to the mitochondrion.

The protein belongs to the universal ribosomal protein uS10 family. Part of the mitochondrial small ribosomal subunit.

It localises to the mitochondrion. In terms of biological role, involved in mitochondrial genome encoded proteins translation. Involved in the binding of tRNA to the ribosomes. This Candida glabrata (strain ATCC 2001 / BCRC 20586 / JCM 3761 / NBRC 0622 / NRRL Y-65 / CBS 138) (Yeast) protein is Small ribosomal subunit protein uS10m (RSM10).